Here is a 178-residue protein sequence, read N- to C-terminus: MSRIGRLPISVPAGVEVSVDGSAVSVKGPKGTLTHTVSAPITVVVEDGTVQVSRPNDERESRSLHGLTRSLIANMIQGVSEGYTKQLEIVGTGYRVQAKGADLEFALGYSHPVPFSAPDGITLSVEGNNKVTVSGIDKQQVGQVAAKIRSLRLPDPYKGKGVRYAGEQIRRKAGKAGK.

This sequence belongs to the universal ribosomal protein uL6 family. In terms of assembly, part of the 50S ribosomal subunit.

Functionally, this protein binds to the 23S rRNA, and is important in its secondary structure. It is located near the subunit interface in the base of the L7/L12 stalk, and near the tRNA binding site of the peptidyltransferase center. This is Large ribosomal subunit protein uL6 from Kocuria rhizophila (strain ATCC 9341 / DSM 348 / NBRC 103217 / DC2201).